The following is a 71-amino-acid chain: UPF0346 protein Sez_1447 (71 aa).

Belongs to the UPF0346 family.

The polypeptide is UPF0346 protein Sez_1447 (Streptococcus equi subsp. zooepidemicus (strain MGCS10565)).